The following is a 102-amino-acid chain: A-type ATP synthase subunit F (102 aa).

Belongs to the V-ATPase F subunit family. In terms of assembly, has multiple subunits with at least A(3), B(3), C, D, E, F, H, I and proteolipid K(x).

Its subcellular location is the cell membrane. Functionally, component of the A-type ATP synthase that produces ATP from ADP in the presence of a proton gradient across the membrane. The protein is A-type ATP synthase subunit F of Thermococcus sibiricus (strain DSM 12597 / MM 739).